The primary structure comprises 73 residues: MAKEDVIEVEGKVVDTLPNAMFKVELENGATILAHVSGKIRMHYIRILPGDRVTVELSPYDLTKGRITYRFIK.

An S1-like domain is found at 1–72 (MAKEDVIEVE…TKGRITYRFI (72 aa)).

This sequence belongs to the IF-1 family. Component of the 30S ribosomal translation pre-initiation complex which assembles on the 30S ribosome in the order IF-2 and IF-3, IF-1 and N-formylmethionyl-tRNA(fMet); mRNA recruitment can occur at any time during PIC assembly.

It localises to the cytoplasm. Functionally, one of the essential components for the initiation of protein synthesis. Stabilizes the binding of IF-2 and IF-3 on the 30S subunit to which N-formylmethionyl-tRNA(fMet) subsequently binds. Helps modulate mRNA selection, yielding the 30S pre-initiation complex (PIC). Upon addition of the 50S ribosomal subunit IF-1, IF-2 and IF-3 are released leaving the mature 70S translation initiation complex. The polypeptide is Translation initiation factor IF-1 (Lactobacillus johnsonii (strain CNCM I-12250 / La1 / NCC 533)).